A 291-amino-acid chain; its full sequence is Taste receptor type 2 member 16 (291 aa).

Residue Met-1 is a topological domain, extracellular. Residues 2-22 (IPIQLTVFFMIIYVLESLTII) form a helical membrane-spanning segment. Residues 23 to 41 (VQSSLIVAVLGREWLQVRR) lie on the Cytoplasmic side of the membrane. Residues 42 to 62 (LMPVDMILISLGISRFCLQWA) form a helical membrane-spanning segment. Residues 63 to 84 (SMLNNFCSYFNLNYVLCNLTIT) are Extracellular-facing. The N-linked (GlcNAc...) asparagine glycan is linked to Asn-80. Residues 85–105 (WEFFNILTFWLNSLLTVFYCI) form a helical membrane-spanning segment. At 106-125 (KVSSFTHHIFLWLRWRILRL) the chain is on the cytoplasmic side. Residues 126–146 (FPWILLGSLMITCVTIIPSAI) traverse the membrane as a helical segment. Residues 147 to 182 (GNYIQIQLLTMEHLPRNSTVTDKLENFHQYQFQAHT) are Extracellular-facing. Asn-163 carries an N-linked (GlcNAc...) asparagine glycan. A helical transmembrane segment spans residues 183 to 203 (VALVIPFILFLASTIFLMASL). Over 204–228 (TKQIQHHSTGHCNPSMKARFTALRS) the chain is Cytoplasmic. The chain crosses the membrane as a helical span at residues 229 to 249 (LAVLFIVFTSYFLTILITIIG). At 250–257 (TLFDKRCW) the chain is on the extracellular side. A helical transmembrane segment spans residues 258–278 (LWVWEAFVYAFILMHSTSLML). Residues 279–291 (SSPTLKRILKGKC) lie on the Cytoplasmic side of the membrane.

This sequence belongs to the G-protein coupled receptor T2R family. In terms of assembly, interacts with RTP3 and RTP4. As to expression, expressed in a subset of gustducin-positive taste receptor cells of the tongue. Expressed in circumvallate papillae and testis.

The protein localises to the cell membrane. In terms of biological role, gustducin-coupled receptor implicated in the perception of bitter compounds in the oral cavity and the gastrointestinal tract. Signals through PLCB2 and the calcium-regulated cation channel TRPM5. This is Taste receptor type 2 member 16 (TAS2R16) from Homo sapiens (Human).